The chain runs to 393 residues: MLITVYCVRRDLSEITFSLEVDGDFELENFRALCELESGIPASDTLIVYAERPLTDNQRSLASYGLKDGDVVILRQKEAPETRPAAPFPGLDFSTIAVPGASSQPDPSQPQAPPPPPDTSSFPQGLDNPALLRQMLLANPHELSLLKERNPPLAEALLSGDLEKFTKVLQEQQQERARREQERIRLYSADPFDLDAQAKIEEDIRQHNIEENMTIAMEEAPESFGQVVMLYINCKVNGYPVKAFVDSGAQMTIMSQACAERCHIMRLVDRRWAGIAKGVGTQKIIGRVHLAQVQIEGDFLPCSFSILEEQPMDMLLGLDMLKRHQCSIDLEKNVLVIGTTGTHTTFLPEGELPECARLAYGPGREEVPPEEIADRELAEVLQKSADEADQQKP.

The Ubiquitin-like domain occupies 1 to 81; that stretch reads MLITVYCVRR…VILRQKEAPE (81 aa). The interval 82-127 is disordered; sequence TRPAAPFPGLDFSTIAVPGASSQPDPSQPQAPPPPPDTSSFPQGLD. Positions 107–118 are enriched in pro residues; sequence PSQPQAPPPPPD. D246 is an active-site residue. The Ubiquitin-binding motif lies at 370–389; it reads EEIADRELAEVLQKSADEAD.

The protein belongs to the DDI1 family. As to quaternary structure, homodimer.

It is found in the cytoplasm. Its subcellular location is the cytosol. The protein resides in the chromosome. Its function is as follows. Aspartic protease that mediates the cleavage of NFE2L1/NRF1 at 'Leu-104', thereby promoting release of NFE2L1/NRF1 from the endoplasmic reticulum membrane. Ubiquitination of NFE2L1/NRF1 is a prerequisite for cleavage, suggesting that DDI2 specifically recognizes and binds ubiquitinated NFE2L1/NRF1. Seems to act as a proteasomal shuttle which links the proteasome and replication fork proteins like RTF2. Required for cellular survival following replication stress. This is Protein DDI1 homolog 2 (ddi2) from Xenopus laevis (African clawed frog).